We begin with the raw amino-acid sequence, 223 residues long: Serine/threonine/tyrosine-interacting protein (223 aa).

The Tyrosine-protein phosphatase domain maps to 28–176 (EMQEILPGLF…LQEYEAIYLA (149 aa)). The short motif at 76 to 78 (FQQ) is the Interaction with FBXW7 element. Residues Ser184, Ser193, and Ser201 each carry the phosphoserine modification. The disordered stretch occupies residues 197–223 (GTTGSLKRTHEEEDDFGTMQVATAQNG).

Belongs to the protein-tyrosine phosphatase family. Non-receptor class subfamily. Interacts with MAPK1; independently of MAPK1 phosphorylation status. Interacts with CARHSP1/Crhsp-24. Interacts (via FQQ motif) with FBXW7 isoforms 1 (via F-box domain) and 3 (via F-box domain); the interaction is direct and prevents FBXW7 interaction with SKP1, a component of the SCF(FBXW7) complex. Does not interact with FBXW7 isoform 2.

The protein localises to the nucleus. It is found in the cytoplasm. It localises to the cytosol. In terms of biological role, catalytically inactive phosphatase. Acts as a nuclear anchor for MAPK1/MAPK3 (ERK1/ERK2). Modulates cell-fate decisions and cell migration by spatiotemporal regulation of MAPK1/MAPK3 (ERK1/ERK2). By binding to the F-box of FBXW7, prevents the assembly of FBXW7 into the SCF E3 ubiquitin-protein ligase complex, and thereby inhibits degradation of its substrates. Plays a role in spermatogenesis. The chain is Serine/threonine/tyrosine-interacting protein from Homo sapiens (Human).